The chain runs to 248 residues: Allergin-1 (248 aa).

The first 33 residues, 1-33, serve as a signal peptide directing secretion; the sequence is MGDDDTPVCLSVASCKGVSCWLDKLLLWALTLS. Topologically, residues 34–150 are extracellular; sequence ITLRNTAVDC…DESCSSCLLS (117 aa). An Ig-like C2-type domain is found at 54 to 137; sequence PNLNSSMSVV…SKYSQNFNFT (84 aa). N-linked (GlcNAc...) asparagine glycosylation is present at asparagine 68. Cysteine 73 and cysteine 120 form a disulfide bridge. The N-linked (GlcNAc...) asparagine glycan is linked to asparagine 135. The helical transmembrane segment at 151–171 threads the bilayer; sequence LLLPGVLLGLILPGLAFLIYL. Residues 172–248 are Cytoplasmic-facing; the sequence is KYKKGCTGKT…DDYIYSELTY (77 aa). Short sequence motifs (ITIM motif) lie at residues 216 to 221 and 241 to 246; these read IHYTTP and YIYSEL. 2 positions are modified to phosphotyrosine: tyrosine 218 and tyrosine 243.

Monomer. Interacts (tyrosine-phosphorylated) with PTPN6, PTPN11 and INPP5D. In terms of processing, N-glycosylated. Mast cell-specific. Expressed in primary and transformed mast cells.

It is found in the cell membrane. Immunoglobulin-like receptor which plays an inhibitory role in degranulation of mast cells. Negatively regulates IgE-mediated mast cell activation and suppresses the type I immediate hypersensitivity reaction. In Rattus norvegicus (Rat), this protein is Allergin-1 (Milr1).